We begin with the raw amino-acid sequence, 187 residues long: Adenylate kinase (187 aa).

10 to 15 (GSGKGT) contacts ATP. The interval 30-59 (STGDLLRAEVAAGSPLGVKAKEVMARGDLV) is NMP. AMP is bound by residues Thr31, Arg36, 57–59 (DLV), 85–88 (GYPR), and Gln92. Residues 126–136 (GRAKAEGREDD) form an LID region. Arg127 lines the ATP pocket. Residues Arg133 and Arg144 each coordinate AMP. Gly172 lines the ATP pocket.

This sequence belongs to the adenylate kinase family. Monomer.

It is found in the cytoplasm. It catalyses the reaction AMP + ATP = 2 ADP. It functions in the pathway purine metabolism; AMP biosynthesis via salvage pathway; AMP from ADP: step 1/1. In terms of biological role, catalyzes the reversible transfer of the terminal phosphate group between ATP and AMP. Plays an important role in cellular energy homeostasis and in adenine nucleotide metabolism. The sequence is that of Adenylate kinase from Xanthomonas campestris pv. campestris (strain B100).